The sequence spans 184 residues: dCTP deaminase (184 aa).

Residues 107–112 (KSTYAR), 131–133 (TLE), Q152, Y166, and Q176 contribute to the dCTP site. Residue E133 is the Proton donor/acceptor of the active site.

This sequence belongs to the dCTP deaminase family. In terms of assembly, homotrimer.

It catalyses the reaction dCTP + H2O + H(+) = dUTP + NH4(+). It functions in the pathway pyrimidine metabolism; dUMP biosynthesis; dUMP from dCTP (dUTP route): step 1/2. In terms of biological role, catalyzes the deamination of dCTP to dUTP. The sequence is that of dCTP deaminase from Novosphingobium aromaticivorans (strain ATCC 700278 / DSM 12444 / CCUG 56034 / CIP 105152 / NBRC 16084 / F199).